We begin with the raw amino-acid sequence, 935 residues long: Peptidyl-glycine alpha-amidating monooxygenase A (935 aa).

The signal sequence occupies residues 1–36 (MASLSSSFLVLFLLFQNSCYCFRSPLSVFKRYEEST). A peptidylglycine alpha-hydroxylating monooxygenase region spans residues 1–390 (MASLSSSFLV…KREEEEVLDQ (390 aa)). The Intragranular portion of the chain corresponds to 37–825 (RSLSNDCLGT…VQESSAGVSF (789 aa)). 5 disulfide bridges follow: Cys43/Cys182, Cys77/Cys122, Cys110/Cys127, Cys223/Cys330, and Cys289/Cys311. Residues His103 and His104 each coordinate Cu(2+). Positions 168, 238, 240, and 310 each coordinate Cu(2+). Residues 362-385 (HGHHHTEAEPEKNTGLQQPKREEE) are disordered. Residues 391–712 (DVHLEEDTDW…SPSKAEHRSV (322 aa)) are peptidyl-alpha-hydroxyglycine alpha-amidating lyase. Arg426 is a binding site for a protein. 3 NHL repeats span residues 463 to 504 (SKVL…LGAG), 512 to 557 (LGRA…FSPN), and 565 to 609 (GEET…FHAE). Cystine bridges form between Cys526–Cys547 and Cys594–Cys605. Residues Tyr546 and Arg598 each coordinate a protein. The N-linked (GlcNAc...) asparagine glycan is linked to Asn658. An NHL 4 repeat occupies 662 to 705 (GDILDTFIPARKNFDMPHDIAAADDGTVYVGDAHANAVWKFSPS). Over residues 728–751 (FETHIRSRPKTNESVEKQTQEKQQ) the composition is skewed to basic and acidic residues. Disordered regions lie at residues 728–764 (FETHIRSRPKTNESVEKQTQEKQQKQKNSAGVSTQEK) and 778–812 (QEKQNVVQESSAGVPTQEKQSVVQESSAGVSTQEK). Asn739 carries N-linked (GlcNAc...) asparagine glycosylation. Polar residues predominate over residues 755-764 (NSAGVSTQEK). A helical transmembrane segment spans residues 826–846 (VLIITLLIIPIAVLIAIAIFI). The Cytoplasmic segment spans residues 847-935 (RWRKVRMYGG…PIPPAPVSSS (89 aa)). Residues 896 to 935 (KGFDRLSTEGSDQEKDDDDGSDSEEEYSAPPIPPAPVSSS) are disordered. Acidic residues predominate over residues 909–922 (EKDDDDGSDSEEEY). A compositionally biased stretch (pro residues) spans 925-935 (PPIPPAPVSSS).

In the C-terminal section; belongs to the peptidyl-alpha-hydroxyglycine alpha-amidating lyase family. This sequence in the N-terminal section; belongs to the copper type II ascorbate-dependent monooxygenase family. Monomer. Requires Zn(2+) as cofactor. It depends on Cu(2+) as a cofactor.

Its subcellular location is the cytoplasmic vesicle. The protein localises to the secretory vesicle membrane. The catalysed reaction is a [peptide]-C-terminal glycine + 2 L-ascorbate + O2 = a [peptide]-C-terminal (2S)-2-hydroxyglycine + 2 monodehydro-L-ascorbate radical + H2O. It catalyses the reaction a [peptide]-C-terminal (2S)-2-hydroxyglycine = a [peptide]-C-terminal amide + glyoxylate. Bifunctional enzyme that catalyzes amidation of the C-terminus of proteins. Alpha-amidation is present at the C-terminus of many endocrine hormones and neuropeptides and is required for their activity. C-terminal amidation also takes place in response to protein fragmentation triggered by oxidative stress, promoting degradation of amidated protein fragments by the proteasome. Alpha-amidation involves two sequential reactions, both of which are catalyzed by separate catalytic domains of the enzyme. The first step, catalyzed by peptidyl alpha-hydroxylating monooxygenase (PHM) domain, is the copper-, ascorbate-, and O2- dependent stereospecific hydroxylation (with S stereochemistry) at the alpha-carbon (C-alpha) of the C-terminal glycine of the peptidylglycine substrate. The second step, catalyzed by the peptidylglycine amidoglycolate lyase (PAL) domain, is the zinc-dependent cleavage of the N-C-alpha bond, producing the alpha-amidated peptide and glyoxylate. This is Peptidyl-glycine alpha-amidating monooxygenase A (pam-a) from Xenopus laevis (African clawed frog).